The chain runs to 64 residues: Large ribosomal subunit protein bL35 (64 aa).

Positions 1-55 (MPKMKTNKSVSARFKLTASGQLKRTRPGKRHKLSKKSSQEKRNLSKQPLVDKGQV) are disordered. Positions 23 to 35 (KRTRPGKRHKLSK) are enriched in basic residues.

Belongs to the bacterial ribosomal protein bL35 family.

The polypeptide is Large ribosomal subunit protein bL35 (Chlamydia pneumoniae (Chlamydophila pneumoniae)).